Consider the following 303-residue polypeptide: MIYTSLAGELQSLVKGSIQINEPMRKHTTWKIGGKADLFLNPSDKEDIRQAVEFAREKAIPITVIGNGSNLLVKDGGIRGLVIKVGRGMAKITIEGTSIKAGAGALLPELAVFACKNSLGGFGFAAGIPGSLGGAIVMNAGAMNGCVSDVLQSIVVLNERNQFEVLTKDHLNFAYRTSNLQSRGLICVETCWQGYAKDQWLIEQETKEYLAKRKAAQPQGFPNAGSVFKNPEGDFAGRLIEGCGGKGLRVGDAEVSSKHANWILNLGRATAQDVLILIDHLKQMVQERFGVLLQLEVKVLGED.

The region spanning 32–212 (IGGKADLFLN…EQETKEYLAK (181 aa)) is the FAD-binding PCMH-type domain. Arginine 176 is an active-site residue. The active-site Proton donor is serine 226. Glutamate 296 is a catalytic residue.

This sequence belongs to the MurB family. It depends on FAD as a cofactor.

The protein resides in the cytoplasm. The enzyme catalyses UDP-N-acetyl-alpha-D-muramate + NADP(+) = UDP-N-acetyl-3-O-(1-carboxyvinyl)-alpha-D-glucosamine + NADPH + H(+). It functions in the pathway cell wall biogenesis; peptidoglycan biosynthesis. Cell wall formation. This is UDP-N-acetylenolpyruvoylglucosamine reductase from Desulforamulus reducens (strain ATCC BAA-1160 / DSM 100696 / MI-1) (Desulfotomaculum reducens).